We begin with the raw amino-acid sequence, 76 residues long: MKKDIHPKLHKATVRCHCGYESELYSTIGEEVSTEICSNCHPFYTGKQRFVDTAGRIDRFKKKFANFDAASKVKGN.

Zn(2+)-binding residues include cysteine 16, cysteine 18, cysteine 37, and cysteine 40.

This sequence belongs to the bacterial ribosomal protein bL31 family. Type A subfamily. In terms of assembly, part of the 50S ribosomal subunit. Zn(2+) serves as cofactor.

Functionally, binds the 23S rRNA. This chain is Large ribosomal subunit protein bL31, found in Maridesulfovibrio salexigens (strain ATCC 14822 / DSM 2638 / NCIMB 8403 / VKM B-1763) (Desulfovibrio salexigens).